We begin with the raw amino-acid sequence, 581 residues long: Proline--tRNA ligase (581 aa).

This sequence belongs to the class-II aminoacyl-tRNA synthetase family. ProS type 1 subfamily. In terms of assembly, homodimer.

It is found in the cytoplasm. It carries out the reaction tRNA(Pro) + L-proline + ATP = L-prolyl-tRNA(Pro) + AMP + diphosphate. Functionally, catalyzes the attachment of proline to tRNA(Pro) in a two-step reaction: proline is first activated by ATP to form Pro-AMP and then transferred to the acceptor end of tRNA(Pro). As ProRS can inadvertently accommodate and process non-cognate amino acids such as alanine and cysteine, to avoid such errors it has two additional distinct editing activities against alanine. One activity is designated as 'pretransfer' editing and involves the tRNA(Pro)-independent hydrolysis of activated Ala-AMP. The other activity is designated 'posttransfer' editing and involves deacylation of mischarged Ala-tRNA(Pro). The misacylated Cys-tRNA(Pro) is not edited by ProRS. In Azoarcus sp. (strain BH72), this protein is Proline--tRNA ligase.